We begin with the raw amino-acid sequence, 157 residues long: MSIEVNNESGVVVDEAQLVTLSRFIFERLYIHPQAELSILLVDEPAMEKLHIELMDEPGATDVLSVPMDELTPGTPEKPTPQGMLGDIAICPQVAEVQARNAGHPTQDEMLLLTTHGILHLLGFDHAEPEEKEEMFGLQRELLSEFLGKDAPMETMQ.

Zn(2+) contacts are provided by H116, H120, and H126.

Belongs to the endoribonuclease YbeY family. Zn(2+) is required as a cofactor.

It is found in the cytoplasm. In terms of biological role, single strand-specific metallo-endoribonuclease involved in late-stage 70S ribosome quality control and in maturation of the 3' terminus of the 16S rRNA. This Paenarthrobacter aurescens (strain TC1) protein is Endoribonuclease YbeY.